Here is a 420-residue protein sequence, read N- to C-terminus: UDP-N-acetylglucosamine 1-carboxyvinyltransferase (420 aa).

22–23 (KN) serves as a coordination point for phosphoenolpyruvate. A UDP-N-acetyl-alpha-D-glucosamine-binding site is contributed by arginine 92. Cysteine 116 acts as the Proton donor in catalysis. The residue at position 116 (cysteine 116) is a 2-(S-cysteinyl)pyruvic acid O-phosphothioketal. UDP-N-acetyl-alpha-D-glucosamine is bound by residues 121–125 (RPIDL), aspartate 307, and leucine 329.

It belongs to the EPSP synthase family. MurA subfamily.

Its subcellular location is the cytoplasm. The enzyme catalyses phosphoenolpyruvate + UDP-N-acetyl-alpha-D-glucosamine = UDP-N-acetyl-3-O-(1-carboxyvinyl)-alpha-D-glucosamine + phosphate. It functions in the pathway cell wall biogenesis; peptidoglycan biosynthesis. Cell wall formation. Adds enolpyruvyl to UDP-N-acetylglucosamine. The sequence is that of UDP-N-acetylglucosamine 1-carboxyvinyltransferase from Nitratiruptor sp. (strain SB155-2).